The chain runs to 184 residues: Ribosome-recycling factor (184 aa).

This sequence belongs to the RRF family.

It localises to the cytoplasm. Responsible for the release of ribosomes from messenger RNA at the termination of protein biosynthesis. May increase the efficiency of translation by recycling ribosomes from one round of translation to another. This Cutibacterium acnes (strain DSM 16379 / KPA171202) (Propionibacterium acnes) protein is Ribosome-recycling factor.